Consider the following 84-residue polypeptide: Protein SlyX homolog (84 aa).

This sequence belongs to the SlyX family.

In Mannheimia succiniciproducens (strain KCTC 0769BP / MBEL55E), this protein is Protein SlyX homolog.